The sequence spans 274 residues: Diaminopimelate epimerase (274 aa).

Substrate-binding residues include Asn11, Gln44, and Asn64. Cys73 functions as the Proton donor in the catalytic mechanism. Substrate is bound by residues 74 to 75 (GN), Asn157, Asn190, and 208 to 209 (ER). Cys217 acts as the Proton acceptor in catalysis. 218–219 (GS) lines the substrate pocket.

The protein belongs to the diaminopimelate epimerase family. Homodimer.

The protein resides in the cytoplasm. It carries out the reaction (2S,6S)-2,6-diaminopimelate = meso-2,6-diaminopimelate. The protein operates within amino-acid biosynthesis; L-lysine biosynthesis via DAP pathway; DL-2,6-diaminopimelate from LL-2,6-diaminopimelate: step 1/1. In terms of biological role, catalyzes the stereoinversion of LL-2,6-diaminopimelate (L,L-DAP) to meso-diaminopimelate (meso-DAP), a precursor of L-lysine and an essential component of the bacterial peptidoglycan. The sequence is that of Diaminopimelate epimerase from Actinobacillus pleuropneumoniae serotype 7 (strain AP76).